The primary structure comprises 229 residues: Enolase-phosphatase E1 (229 aa).

The interval 207–229 (RDPASHHPQVQRFDDIHPEQIPA) is disordered. Basic and acidic residues predominate over residues 218–229 (RFDDIHPEQIPA).

Belongs to the HAD-like hydrolase superfamily. MasA/MtnC family. As to quaternary structure, monomer. Requires Mg(2+) as cofactor.

It carries out the reaction 5-methylsulfanyl-2,3-dioxopentyl phosphate + H2O = 1,2-dihydroxy-5-(methylsulfanyl)pent-1-en-3-one + phosphate. The protein operates within amino-acid biosynthesis; L-methionine biosynthesis via salvage pathway; L-methionine from S-methyl-5-thio-alpha-D-ribose 1-phosphate: step 3/6. It participates in amino-acid biosynthesis; L-methionine biosynthesis via salvage pathway; L-methionine from S-methyl-5-thio-alpha-D-ribose 1-phosphate: step 4/6. Functionally, bifunctional enzyme that catalyzes the enolization of 2,3-diketo-5-methylthiopentyl-1-phosphate (DK-MTP-1-P) into the intermediate 2-hydroxy-3-keto-5-methylthiopentenyl-1-phosphate (HK-MTPenyl-1-P), which is then dephosphorylated to form the acireductone 1,2-dihydroxy-3-keto-5-methylthiopentene (DHK-MTPene). This is Enolase-phosphatase E1 from Klebsiella pneumoniae (strain 342).